The following is a 191-amino-acid chain: Adenine phosphoribosyltransferase 5 (191 aa).

The protein belongs to the purine/pyrimidine phosphoribosyltransferase family. As to quaternary structure, homodimer.

It localises to the cytoplasm. It carries out the reaction AMP + diphosphate = 5-phospho-alpha-D-ribose 1-diphosphate + adenine. It participates in purine metabolism; AMP biosynthesis via salvage pathway; AMP from adenine: step 1/1. Functionally, catalyzes a salvage reaction resulting in the formation of AMP, that is energically less costly than de novo synthesis. May contribute to the recycling of adenine into adenylate nucleotides and the inactivation of cytokinins by phosphoribosylation. Possesses low activity toward adenine, but can efficiently convert cytokinins from free bases (active form) to the corresponding nucleotides (inactive form). In Arabidopsis thaliana (Mouse-ear cress), this protein is Adenine phosphoribosyltransferase 5 (APT5).